The sequence spans 199 residues: NAD(P)H dehydrogenase (quinone) (199 aa).

Positions 4–190 (VLVLYHSMYG…AIARFQGKHV (187 aa)) constitute a Flavodoxin-like domain. Residues 10–15 (SMYGHI) and 79–81 (TRF) contribute to the FMN site. Tyr-12 lines the NAD(+) pocket. Trp-99 contributes to the substrate binding site. Position 134 (His-134) interacts with FMN.

Belongs to the WrbA family. The cofactor is FMN.

The catalysed reaction is a quinone + NADH + H(+) = a quinol + NAD(+). The enzyme catalyses a quinone + NADPH + H(+) = a quinol + NADP(+). The protein is NAD(P)H dehydrogenase (quinone) of Tolumonas auensis (strain DSM 9187 / NBRC 110442 / TA 4).